We begin with the raw amino-acid sequence, 170 residues long: MSKAAIAEKEKFVDAFAEELKAAKAILVINYLGLTVEEVTNMRKELRDNDVKMKVIKNTYLRRAAAKAGIEGLDDTFVGPTAVIYTDNADDITEPARIVSKYEDDFDVIEIKGGMLEGKLTSKDEIKELASIPGREGVLSMLVSVLQAPIRDFAYAVKAVAESKDEDSAE.

The protein belongs to the universal ribosomal protein uL10 family. In terms of assembly, part of the ribosomal stalk of the 50S ribosomal subunit. The N-terminus interacts with L11 and the large rRNA to form the base of the stalk. The C-terminus forms an elongated spine to which L12 dimers bind in a sequential fashion forming a multimeric L10(L12)X complex.

Functionally, forms part of the ribosomal stalk, playing a central role in the interaction of the ribosome with GTP-bound translation factors. The sequence is that of Large ribosomal subunit protein uL10 from Lactobacillus helveticus (strain DPC 4571).